A 401-amino-acid chain; its full sequence is Argininosuccinate synthase (401 aa).

8 to 16 (AYSGGLDTS) provides a ligand contact to ATP. An L-citrulline-binding site is contributed by tyrosine 85. Glycine 115 is a binding site for ATP. Threonine 117, asparagine 121, and aspartate 122 together coordinate L-aspartate. Position 121 (asparagine 121) interacts with L-citrulline. L-citrulline is bound by residues arginine 125, serine 173, glutamate 258, and tyrosine 270.

This sequence belongs to the argininosuccinate synthase family. Type 1 subfamily. As to quaternary structure, homotetramer.

The protein localises to the cytoplasm. It catalyses the reaction L-citrulline + L-aspartate + ATP = 2-(N(omega)-L-arginino)succinate + AMP + diphosphate + H(+). It functions in the pathway amino-acid biosynthesis; L-arginine biosynthesis; L-arginine from L-ornithine and carbamoyl phosphate: step 2/3. This chain is Argininosuccinate synthase, found in Staphylococcus epidermidis (strain ATCC 35984 / DSM 28319 / BCRC 17069 / CCUG 31568 / BM 3577 / RP62A).